The chain runs to 190 residues: Sec-independent protein translocase protein TatB (190 aa).

Residues 2-22 form a helical membrane-spanning segment; that stretch reads LPDIGGTELLVIAAVALIVVG. Positions 130 to 190 are disordered; the sequence is IVSKPARKPP…KASTNSDITS (61 aa). Positions 134 to 144 are enriched in basic residues; the sequence is PARKPPAKKAA. Over residues 145 to 163 the composition is skewed to low complexity; the sequence is AKPAAKAELVSKPKASAKA.

It belongs to the TatB family. As to quaternary structure, the Tat system comprises two distinct complexes: a TatABC complex, containing multiple copies of TatA, TatB and TatC subunits, and a separate TatA complex, containing only TatA subunits. Substrates initially bind to the TatABC complex, which probably triggers association of the separate TatA complex to form the active translocon.

The protein localises to the cell inner membrane. Functionally, part of the twin-arginine translocation (Tat) system that transports large folded proteins containing a characteristic twin-arginine motif in their signal peptide across membranes. Together with TatC, TatB is part of a receptor directly interacting with Tat signal peptides. TatB may form an oligomeric binding site that transiently accommodates folded Tat precursor proteins before their translocation. The polypeptide is Sec-independent protein translocase protein TatB (Caulobacter sp. (strain K31)).